Here is a 193-residue protein sequence, read N- to C-terminus: Putative 3-methyladenine DNA glycosylase (193 aa).

Belongs to the DNA glycosylase MPG family.

In Francisella tularensis subsp. tularensis (strain FSC 198), this protein is Putative 3-methyladenine DNA glycosylase.